A 258-amino-acid polypeptide reads, in one-letter code: Imidazole glycerol phosphate synthase subunit HisF (258 aa).

Active-site residues include Asp-12 and Asp-131.

The protein belongs to the HisA/HisF family. As to quaternary structure, heterodimer of HisH and HisF.

The protein resides in the cytoplasm. The enzyme catalyses 5-[(5-phospho-1-deoxy-D-ribulos-1-ylimino)methylamino]-1-(5-phospho-beta-D-ribosyl)imidazole-4-carboxamide + L-glutamine = D-erythro-1-(imidazol-4-yl)glycerol 3-phosphate + 5-amino-1-(5-phospho-beta-D-ribosyl)imidazole-4-carboxamide + L-glutamate + H(+). Its pathway is amino-acid biosynthesis; L-histidine biosynthesis; L-histidine from 5-phospho-alpha-D-ribose 1-diphosphate: step 5/9. Functionally, IGPS catalyzes the conversion of PRFAR and glutamine to IGP, AICAR and glutamate. The HisF subunit catalyzes the cyclization activity that produces IGP and AICAR from PRFAR using the ammonia provided by the HisH subunit. In Corynebacterium diphtheriae (strain ATCC 700971 / NCTC 13129 / Biotype gravis), this protein is Imidazole glycerol phosphate synthase subunit HisF.